The chain runs to 363 residues: Fructose-bisphosphate aldolase C (363 aa).

Tyrosine 5 carries the phosphotyrosine modification. A phosphoserine mark is found at serine 36, serine 39, and serine 45. Arginine 56 serves as a coordination point for substrate. At lysine 111 the chain carries N6-acetyllysine. Substrate is bound at residue lysine 147. The active-site Proton acceptor is glutamate 188. Lysine 230 (schiff-base intermediate with dihydroxyacetone-P) is an active-site residue.

The protein belongs to the class I fructose-bisphosphate aldolase family. Homotetramer. Interacts with ATP6V1E1. High expression in the adult brain.

The enzyme catalyses beta-D-fructose 1,6-bisphosphate = D-glyceraldehyde 3-phosphate + dihydroxyacetone phosphate. It participates in carbohydrate degradation; glycolysis; D-glyceraldehyde 3-phosphate and glycerone phosphate from D-glucose: step 4/4. This chain is Fructose-bisphosphate aldolase C (Aldoc), found in Rattus norvegicus (Rat).